Reading from the N-terminus, the 331-residue chain is Nucleotide sugar transporter SLC35B4 (331 aa).

The next 11 membrane-spanning stretches (helical) occupy residues 4 to 24 (ALAVGLVFAGCCSNVIFLELL), 30 to 50 (GCGNIVTFAQFLFIAVEGFLF), 59 to 79 (PAIPIRYYAIMVTMFFTVSVV), 92 to 112 (LHMIFRSGSLIANMILGIIIL), 117 to 137 (SIFKYTSIALVSVGIFICTFM), 153 to 173 (GFQAFVWWLLGIGALTFALLM), 201 to 221 (ALPLPGFVFLASDIYDHAVLF), 229 to 249 (IPVIGVTLPIMWFYLLMNIIT), 251 to 267 (YVCIRGVFILTTECASL), 268 to 288 (TVTLVVTLRKFVSLIFSILYF), and 291 to 311 (PFTLWHWLGTLFVFIGTLMYT). The Mediates endoplasmic reticulum retention motif lies at 326–331 (KDSKKN).

Belongs to the nucleotide-sugar transporter family. SLC35B subfamily.

The protein localises to the endoplasmic reticulum membrane. The enzyme catalyses UDP-N-acetyl-alpha-D-glucosamine(in) + UDP-alpha-D-glucuronate(out) = UDP-N-acetyl-alpha-D-glucosamine(out) + UDP-alpha-D-glucuronate(in). The catalysed reaction is UDP-alpha-D-xylose(in) + UDP-alpha-D-glucuronate(out) = UDP-alpha-D-xylose(out) + UDP-alpha-D-glucuronate(in). Antiporter that transports nucleotide sugars across the endoplasmic reticulum (ER) membrane in exchange for another nucleotide sugar. May couple UDP-alpha-D-glucuronate (UDP-GlcA) or UDP-alpha-D-xylose (UDP-Xyl) efflux to UDP-alpha-D-glucuronate (UDP-GlcA) influx into the ER lumen, which in turn stimulates glucuronidation and excretion of endobiotics and xenobiotics. In Pongo abelii (Sumatran orangutan), this protein is Nucleotide sugar transporter SLC35B4 (SLC35B4).